The following is a 166-amino-acid chain: Regulatory protein RecX (166 aa).

Belongs to the RecX family.

The protein resides in the cytoplasm. Functionally, modulates RecA activity. The chain is Regulatory protein RecX from Shigella dysenteriae serotype 1 (strain Sd197).